The following is a 147-amino-acid chain: Peptide methionine sulfoxide reductase MsrB (147 aa).

The region spanning 25 to 147 (DEYWREHLTE…NSVSLIFNKK (123 aa)) is the MsrB domain. Zn(2+)-binding residues include Cys64, Cys67, Cys113, and Cys116. Catalysis depends on Cys136, which acts as the Nucleophile.

This sequence belongs to the MsrB Met sulfoxide reductase family. It depends on Zn(2+) as a cofactor.

It carries out the reaction L-methionyl-[protein] + [thioredoxin]-disulfide + H2O = L-methionyl-(R)-S-oxide-[protein] + [thioredoxin]-dithiol. This Vibrio cholerae serotype O1 (strain ATCC 39541 / Classical Ogawa 395 / O395) protein is Peptide methionine sulfoxide reductase MsrB.